The following is a 273-amino-acid chain: Large ribosomal subunit protein uL2 (273 aa).

Residues 228-273 (IDHPHGGGEGKTSGGRHPVTPWGFSTKGKKTRKNKRTSKFIVKKRK) form a disordered region. A compositionally biased stretch (basic residues) spans 254–273 (KGKKTRKNKRTSKFIVKKRK).

This sequence belongs to the universal ribosomal protein uL2 family. Part of the 50S ribosomal subunit. Forms a bridge to the 30S subunit in the 70S ribosome.

One of the primary rRNA binding proteins. Required for association of the 30S and 50S subunits to form the 70S ribosome, for tRNA binding and peptide bond formation. It has been suggested to have peptidyltransferase activity; this is somewhat controversial. Makes several contacts with the 16S rRNA in the 70S ribosome. The chain is Large ribosomal subunit protein uL2 from Rickettsia typhi (strain ATCC VR-144 / Wilmington).